Reading from the N-terminus, the 127-residue chain is MEIFGNVVSGLGEGRFFVGLTPYKNKFKELTGFTPFEGTLNVKLKHNFNLDEFNPIEFDGFEIDGKKYFGGKVLLVKLFDKSGHSINCAIVAPKKTDHSKKTLELIAPVHLRKFLSLNNSDVVKIVI.

10 to 15 is a binding site for CDP; that stretch reads GLGEGR. Residues threonine 39 and asparagine 41 each coordinate Mg(2+). FMN-binding residues include threonine 96 and glutamate 104. 109 to 112 serves as a coordination point for CDP; that stretch reads VHLR.

The protein belongs to the archaeal riboflavin kinase family. It depends on Mg(2+) as a cofactor.

It catalyses the reaction riboflavin + CTP = CDP + FMN + H(+). Its pathway is cofactor biosynthesis; FMN biosynthesis; FMN from riboflavin (CTP route): step 1/1. Catalyzes the CTP-dependent phosphorylation of riboflavin (vitamin B2) to form flavin mononucleotide (FMN). This chain is Riboflavin kinase, found in Methanococcus maripaludis (strain C7 / ATCC BAA-1331).